The sequence spans 222 residues: Cytochrome b6 (222 aa).

A helical transmembrane segment spans residues 39–59; that stretch reads IFYCLGGLTLTCFLIQFATGF. Y41 provides a ligand contact to heme b. C42 is a heme c binding site. R90, H93, R94, H107, and R110 together coordinate heme b. The next 3 membrane-spanning stretches (helical) occupy residues 97-117, 123-143, and 193-213; these read ASMM…TGGF, LTWV…VTGY, and LHTF…FLMI. Residues H194 and H209 each contribute to the heme b site. The heme c site is built by R214 and I218. Residue S219 participates in heme b binding.

Belongs to the cytochrome b family. PetB subfamily. As to quaternary structure, the 4 large subunits of the cytochrome b6-f complex are cytochrome b6, subunit IV (17 kDa polypeptide, PetD), cytochrome f and the Rieske protein, while the 4 small subunits are PetG, PetL, PetM and PetN. The complex functions as a dimer. Heme b is required as a cofactor. Requires heme c as cofactor.

It localises to the cellular thylakoid membrane. Functionally, component of the cytochrome b6-f complex, which mediates electron transfer between photosystem II (PSII) and photosystem I (PSI), cyclic electron flow around PSI, and state transitions. This chain is Cytochrome b6, found in Synechocystis sp. (strain ATCC 27184 / PCC 6803 / Kazusa).